We begin with the raw amino-acid sequence, 338 residues long: Aspartate carbamoyltransferase catalytic subunit (338 aa).

The carbamoyl phosphate site is built by Arg72 and Thr73. Lys100 provides a ligand contact to L-aspartate. Carbamoyl phosphate-binding residues include Arg122, His152, and Gln155. Positions 186 and 243 each coordinate L-aspartate. Gly284 and Pro285 together coordinate carbamoyl phosphate.

The protein belongs to the aspartate/ornithine carbamoyltransferase superfamily. ATCase family. In terms of assembly, heterododecamer (2C3:3R2) of six catalytic PyrB chains organized as two trimers (C3), and six regulatory PyrI chains organized as three dimers (R2).

It catalyses the reaction carbamoyl phosphate + L-aspartate = N-carbamoyl-L-aspartate + phosphate + H(+). The protein operates within pyrimidine metabolism; UMP biosynthesis via de novo pathway; (S)-dihydroorotate from bicarbonate: step 2/3. Functionally, catalyzes the condensation of carbamoyl phosphate and aspartate to form carbamoyl aspartate and inorganic phosphate, the committed step in the de novo pyrimidine nucleotide biosynthesis pathway. In Acinetobacter baylyi (strain ATCC 33305 / BD413 / ADP1), this protein is Aspartate carbamoyltransferase catalytic subunit.